Reading from the N-terminus, the 132-residue chain is Agouti-signaling protein (132 aa).

Residues 1–22 (MDVTRLLLATLLVFLCFFTANS) form the signal peptide. N-linked (GlcNAc...) asparagine glycosylation is present at Asn-39. A disordered region spans residues 61–87 (QIGRKEAEKKRSSKKEASMKKVARPRT). The span at 63 to 79 (GRKEAEKKRSSKKEASM) shows a compositional bias: basic and acidic residues. 5 cysteine pairs are disulfide-bonded: Cys-93–Cys-108, Cys-100–Cys-114, Cys-107–Cys-125, Cys-111–Cys-132, and Cys-116–Cys-123. One can recognise an Agouti domain in the interval 93-132 (CVATRNSCKPPAPACCDPCASCQCRFFRSACSCRVLSLNC).

It localises to the secreted. Involved in the regulation of melanogenesis. The binding of ASP to MC1R precludes alpha-MSH initiated signaling and thus blocks production of cAMP, leading to a down-regulation of eumelanogenesis (brown/black pigment) and thus increasing synthesis of pheomelanin (yellow/red pigment). This Gorilla gorilla gorilla (Western lowland gorilla) protein is Agouti-signaling protein (ASIP).